The primary structure comprises 277 residues: MDAQYNPRTVEEVFRDFKGRRAGLVRALTADVEDFFRQCDPEKENLCLYGFPNEHWEVNLPAEEVPPELPEPALGINFARDGMQEKDWLSMVAVHSDAWLLSVAFYFGARFGFDKNDRKRLFGMINDLPTIFEVVSGKSKAKPPSANNHSNSKSKSSNKTKSSEPRAKQPKPQPQPPVKNEGREEEGGPDDEEGGGGGGGGREEEHGETLCGACGESYGADEFWICCDICEKWFHGKCVKITPAKAEHIKQYKCPSCSGGNGGGGGGSGNGKRARPS.

Disordered regions lie at residues 138–206 (KSKA…EEEH) and 255–277 (PSCS…ARPS). Over residues 145–160 (SANNHSNSKSKSSNKT) the composition is skewed to low complexity. Residues 208 to 260 (ETLCGACGESYGADEFWICCDICEKWFHGKCVKITPAKAEHIKQYKCPSCSGG) form a PHD-type zinc finger. A compositionally biased stretch (gly residues) spans 259 to 270 (GGNGGGGGGSGN).

Belongs to the Alfin family. As to quaternary structure, interacts with H3K4me3 and to a lesser extent with H3K4me2.

Its subcellular location is the nucleus. Histone-binding component that specifically recognizes H3 tails trimethylated on 'Lys-4' (H3K4me3), which mark transcription start sites of virtually all active genes. The polypeptide is PHD finger protein ALFIN-LIKE 9 (Oryza sativa subsp. indica (Rice)).